The chain runs to 304 residues: Quinolinate synthase (304 aa).

H24 and S41 together coordinate iminosuccinate. Residue C86 participates in [4Fe-4S] cluster binding. Iminosuccinate contacts are provided by residues 112-114 (YVN) and S129. C171 provides a ligand contact to [4Fe-4S] cluster. Residues 197-199 (HPE) and T214 contribute to the iminosuccinate site. Position 259 (C259) interacts with [4Fe-4S] cluster.

Belongs to the quinolinate synthase family. Type 2 subfamily. Requires [4Fe-4S] cluster as cofactor.

It is found in the cytoplasm. It carries out the reaction iminosuccinate + dihydroxyacetone phosphate = quinolinate + phosphate + 2 H2O + H(+). It participates in cofactor biosynthesis; NAD(+) biosynthesis; quinolinate from iminoaspartate: step 1/1. Catalyzes the condensation of iminoaspartate with dihydroxyacetone phosphate to form quinolinate. The polypeptide is Quinolinate synthase (Geobacter metallireducens (strain ATCC 53774 / DSM 7210 / GS-15)).